Here is a 269-residue protein sequence, read N- to C-terminus: Diaminopimelate epimerase (269 aa).

Substrate is bound by residues N15, Q49, and N66. The active-site Proton donor is the C75. Substrate contacts are provided by residues 76-77 (GN), N155, N187, and 204-205 (ER). C213 acts as the Proton acceptor in catalysis. 214–215 (GS) provides a ligand contact to substrate.

The protein belongs to the diaminopimelate epimerase family. In terms of assembly, homodimer.

It localises to the cytoplasm. It catalyses the reaction (2S,6S)-2,6-diaminopimelate = meso-2,6-diaminopimelate. It participates in amino-acid biosynthesis; L-lysine biosynthesis via DAP pathway; DL-2,6-diaminopimelate from LL-2,6-diaminopimelate: step 1/1. Functionally, catalyzes the stereoinversion of LL-2,6-diaminopimelate (L,L-DAP) to meso-diaminopimelate (meso-DAP), a precursor of L-lysine and an essential component of the bacterial peptidoglycan. This chain is Diaminopimelate epimerase, found in Rickettsia canadensis (strain McKiel).